The chain runs to 435 residues: Adenylosuccinate synthetase (435 aa).

Residues 11–17 and 39–41 each bind GTP; these read GDEGKGK and GHT. The Proton acceptor role is filled by Asp12. Residues Asp12 and Gly39 each coordinate Mg(2+). Residues 12-15, 37-40, Thr128, Arg142, Gln223, Thr238, and Arg302 contribute to the IMP site; these read DEGK and NAGH. Catalysis depends on His40, which acts as the Proton donor. 298 to 304 is a binding site for substrate; it reads SVTGRPR. Residues Arg304, 330–332, and 412–414 each bind GTP; these read KLD and STG.

It belongs to the adenylosuccinate synthetase family. Homodimer. Mg(2+) serves as cofactor.

The protein localises to the cytoplasm. The enzyme catalyses IMP + L-aspartate + GTP = N(6)-(1,2-dicarboxyethyl)-AMP + GDP + phosphate + 2 H(+). The protein operates within purine metabolism; AMP biosynthesis via de novo pathway; AMP from IMP: step 1/2. Its function is as follows. Plays an important role in the de novo pathway of purine nucleotide biosynthesis. Catalyzes the first committed step in the biosynthesis of AMP from IMP. This Coxiella burnetii (strain Dugway 5J108-111) protein is Adenylosuccinate synthetase.